A 278-amino-acid chain; its full sequence is Large ribosomal subunit protein uL2 (278 aa).

Residues 222–278 are disordered; sequence GVVMNPIDHPHGGGEGRTSGGRHPVTPWGKPTKGKKTRSNKSTNKFILISRHKRKKK.

This sequence belongs to the universal ribosomal protein uL2 family. As to quaternary structure, part of the 50S ribosomal subunit. Forms a bridge to the 30S subunit in the 70S ribosome.

One of the primary rRNA binding proteins. Required for association of the 30S and 50S subunits to form the 70S ribosome, for tRNA binding and peptide bond formation. It has been suggested to have peptidyltransferase activity; this is somewhat controversial. Makes several contacts with the 16S rRNA in the 70S ribosome. This Afipia carboxidovorans (strain ATCC 49405 / DSM 1227 / KCTC 32145 / OM5) (Oligotropha carboxidovorans) protein is Large ribosomal subunit protein uL2.